The chain runs to 547 residues: MAAKDVKFDTDARNRMLKGVNTLADAVKVTLGPKGRNVVLEKSFGAPRITKDGVSVAKEIELEDKFENMGAQMVKEVASRTNDEAGDGTTTATVLAQSIVREGLKQVAAGLNPMDLKRGIDLATDKVVEAIKAMAREVKDSDEVAQVGTISANGEAEIGRQIADAMQKVGNDGVITVEENKGLETETDVVEGMQFDRGYLSPYFVTNADKMTAELEDCLILLHEKKLSSLQPMVPLLEQVIQSQKPLLIIAEDVEGEALATLVVNKLRGGLKIAAVKAPGFGDRRKAMLQDIAILTGGQVISEDLGMKLESVTMDMLGTAKKIQITKDETTIVDGAGEKAEIEARVAQIRAQIEETTSDYDREKLQERVAKLAGGVAVIRVGGMTEVEVKERKDRVDDALNATRAAVQEGVIVGGGVALVQAGKSLEGLTGVNADQNAGIAIVRRALEAPLRQIAENAGVDGAVVAGKIRESEDKNFGFNAQTEEYGDMFSFGVIDPAKVTRTALEDAASIAGLLITTEAMVADKPAKEGAAPAGGMPDMGGMGGMM.

ATP contacts are provided by residues 30 to 33, Lys51, 87 to 91, Gly415, and Asp496; these read TLGP and DGTTT. Residues 528-547 are disordered; the sequence is KEGAAPAGGMPDMGGMGGMM. The span at 538 to 547 shows a compositional bias: gly residues; the sequence is PDMGGMGGMM.

It belongs to the chaperonin (HSP60) family. As to quaternary structure, forms a cylinder of 14 subunits composed of two heptameric rings stacked back-to-back. Interacts with the co-chaperonin GroES.

It localises to the cytoplasm. It carries out the reaction ATP + H2O + a folded polypeptide = ADP + phosphate + an unfolded polypeptide.. Functionally, together with its co-chaperonin GroES, plays an essential role in assisting protein folding. The GroEL-GroES system forms a nano-cage that allows encapsulation of the non-native substrate proteins and provides a physical environment optimized to promote and accelerate protein folding. The polypeptide is Chaperonin GroEL (Ruegeria sp. (strain TM1040) (Silicibacter sp.)).